The primary structure comprises 461 residues: Histone acetyltransferase KAT5 (461 aa).

The 58-residue stretch at Ile-8 to Leu-65 folds into the Tudor-knot domain. Lys-52 is modified (N6-acetyllysine). The tract at residues Phe-70–Arg-168 is disordered. Residues Ser-86 and Ser-90 each carry the phosphoserine modification. Basic and acidic residues predominate over residues Ser-90–Glu-100. Residues Lys-96, Lys-98, Lys-135, and Lys-137 each carry the N6-acetyllysine; by autocatalysis modification. Ser-147 bears the Phosphoserine mark. The MYST-type HAT domain occupies Thr-175 to Pro-452. The C2HC MYST-type zinc finger occupies Leu-208 to Leu-233. Residue Lys-275 is modified to N6-acetyllysine; by autocatalysis. The interaction with ATF2 stretch occupies residues Ala-316–Trp-461. Residues Ile-318–Thr-320 and Gln-325–Lys-331 contribute to the acetyl-CoA site. Glu-351 serves as the catalytic Proton donor/acceptor. 2 residues coordinate acetyl-CoA: Ser-355 and Ser-364. Residue Lys-378 forms a Glycyl lysine isopeptide (Lys-Gly) (interchain with G-Cter in SUMO1); alternate linkage. A Glycyl lysine isopeptide (Lys-Gly) (interchain with G-Cter in SUMO2); alternate cross-link involves residue Lys-378. Lys-399 participates in a covalent cross-link: Glycyl lysine isopeptide (Lys-Gly) (interchain with G-Cter in SUMO1).

It belongs to the MYST (SAS/MOZ) family. Component of the NuA4 histone acetyltransferase complex which contains the catalytic subunit KAT5/TIP60 and the subunits EP400, TRRAP/PAF400, BRD8/SMAP, EPC1, DMAP1/DNMAP1, RUVBL1/TIP49, RUVBL2, ING3, actin, ACTL6A/BAF53A, MORF4L1/MRG15, MORF4L2/MRGX, MRGBP, YEATS4/GAS41, VPS72/YL1 and MEAF6. KAT5/TIP60, EPC1, and ING3 together constitute a minimal HAT complex termed Piccolo NuA4. The NuA4 complex interacts with MYC. Interacts with ATM. Interacts with JADE1. Interacts with PLA2G4A/CPLA2, EDNRA and HDAC7. Interacts with the cytoplasmic tail of APP and APBB1/FE65. Interacts with TRIM24 and TRIM68. Forms a complex with SENP6 and UBE2I in response to UV irradiation. Identified in a complex with HINT1. Interacts with ATF2 and CUL3. Interacts with NR1D2 (via N-terminus). Component of a SWR1-like complex. Interacts with FOXP3. Interacts with ZBTB49. Interacts with SRF. Interacts with ATF3; promoting autoacetylation and deubiquitination by USP7. Interacts with EP300/p300; interaction promotes KAT5 autoacetylation. Interacts with PRKDC; interaction is impaired following KAT5 sumoylation. Interacts with GPR50. Phosphorylated on Ser-86 and Ser-90; enhanced during G2/M phase. The phosphorylated form has a higher activity. Phosphorylation at Ser-90 by CDK1 or CDK9 is a prerequisite for phosphorylation at Ser-86 by GSK3. Phosphorylation at Ser-86 by GSK3 (GSK3A or GSK3B) activates acetyltransferase and acyltransferase activities. Phosphorylation at Ser-90 by CDK9 promotes KAT5 recruitment to chromatin. Phosphorylation by VRK1 following DNA damage promotes KAT5 association with chromatin and histone acetyltransferase activity. Post-translationally, autoacetylated. Autoacetylation is required for histone acetyltransferase activity. Autoacetylation at Lys-275 is facilitated by interaction with EP300/p300: it prevents ubiquitination and subsequent degradation by the proteasome and promotes acetylation of target proteins. Deacetylated by HDAC3 and SIRT1. Deacetylation by HDAC3 promotes its ubiquitination and cytoplasmic localization. In terms of processing, sumoylated by UBE2I at Lys-378 and Lys-399, leading to increase of its histone acetyltransferase activity in UV-induced DNA damage response, as well as its translocation to nuclear bodies. Sumoylation with SUMO2 by PIAS4 at Lys-378 promotes repair of DNA double-strand breaks (DSBs) via homologous recombination (HR). Sumoylation by PIAS4 impairs interaction with PRKDC, inhibiting non-homologous end joining (NHEJ)-mediated repair of DSBs, thereby facilitating HR. Desumoylated by SENP3. Ubiquitinated by MDM2, leading to its proteasome-dependent degradation. Ubiquitination is prevented by autoacetylation at Lys-275. Ubiquitinated following deacetylation by HDAC3, leading to cytoplasmic localization. Deubiquitinated by USP7 following interaction with ATF3, promoting its stabilization.

The protein localises to the nucleus. It is found in the chromosome. The protein resides in the cytoplasm. It localises to the centromere. Its subcellular location is the kinetochore. The protein localises to the cytoskeleton. It is found in the spindle pole. The protein resides in the nucleolus. It localises to the perinuclear region. The catalysed reaction is L-lysyl-[histone] + acetyl-CoA = N(6)-acetyl-L-lysyl-[histone] + CoA + H(+). It carries out the reaction L-lysyl-[protein] + acetyl-CoA = N(6)-acetyl-L-lysyl-[protein] + CoA + H(+). The enzyme catalyses (2E)-butenoyl-CoA + L-lysyl-[protein] = N(6)-(2E)-butenoyl-L-lysyl-[protein] + CoA + H(+). It catalyses the reaction 2-hydroxyisobutanoyl-CoA + L-lysyl-[protein] = N(6)-(2-hydroxyisobutanoyl)-L-lysyl-[protein] + CoA + H(+). The catalysed reaction is (S)-lactoyl-CoA + L-lysyl-[protein] = N(6)-[(S)-lactoyl]-L-lysyl-[protein] + CoA + H(+). Its activity is regulated as follows. Acyltransferase and acetyltransferase activities are activated by phosphorylation and autoacetylation. Autoacetylation activates the histone acetyltransferase activity. In terms of biological role, catalytic subunit of the NuA4 histone acetyltransferase complex, a multiprotein complex involved in transcriptional activation of select genes principally by acetylation of nucleosomal histones H2A and H4. Histone acetylation alters nucleosome-DNA interactions and promotes interaction of the modified histones with other proteins which positively regulate transcription. The NuA4 histone acetyltransferase complex is required for the activation of transcriptional programs associated with proto-oncogene mediated growth induction, tumor suppressor mediated growth arrest and replicative senescence, apoptosis, and DNA repair. The NuA4 complex plays a direct role in repair of DNA double-strand breaks (DSBs) by promoting homologous recombination (HR): the complex inhibits TP53BP1 binding to chromatin via MBTD1, which recognizes and binds histone H4 trimethylated at 'Lys-20' (H4K20me), and KAT5 that catalyzes acetylation of 'Lys-15' of histone H2A (H2AK15ac), thereby blocking the ubiquitination mark required for TP53BP1 localization at DNA breaks. Also involved in DSB repair by mediating acetylation of 'Lys-5' of histone H2AX (H2AXK5ac), promoting NBN/NBS1 assembly at the sites of DNA damage. The NuA4 complex plays a key role in hematopoietic stem cell maintenance and is required to maintain acetylated H2A.Z/H2AZ1 at MYC target genes. The NuA4 complex is also required for spermatid development by promoting acetylation of histones: histone hyperacetylation is required for histone replacement during the transition from round to elongating spermatids. Component of a SWR1-like complex that specifically mediates the removal of histone H2A.Z/H2AZ1 from the nucleosome. Also acetylates non-histone proteins, such as BMAL1, ATM, AURKB, CHKA, CGAS, ERCC4/XPF, LPIN1, TP53/p53, NDC80/HEC1, NR1D2, RAN, SOX4, FOXP3, SQSTM1, ULK1 and RUBCNL/Pacer. Directly acetylates and activates ATM. Promotes nucleotide excision repair (NER) by mediating acetylation of ERCC4/XPF, thereby promoting formation of the ERCC4-ERCC1 complex. Relieves NR1D2-mediated inhibition of APOC3 expression by acetylating NR1D2. Acts as a regulator of regulatory T-cells (Treg) by catalyzing FOXP3 acetylation, thereby promoting FOXP3 transcriptional repressor activity. Involved in skeletal myoblast differentiation by mediating acetylation of SOX4. Catalyzes acetylation of APBB1/FE65, increasing its transcription activator activity. Promotes transcription elongation during the activation phase of the circadian cycle by catalyzing acetylation of BMAL1, promoting elongation of circadian transcripts. Together with GSK3 (GSK3A or GSK3B), acts as a regulator of autophagy: phosphorylated at Ser-86 by GSK3 under starvation conditions, leading to activate acetyltransferase activity and promote acetylation of key autophagy regulators, such as ULK1 and RUBCNL/Pacer. Acts as a regulator of the cGAS-STING innate antiviral response by catalyzing acetylation the N-terminus of CGAS, thereby promoting CGAS DNA-binding and activation. Also regulates lipid metabolism by mediating acetylation of CHKA or LPIN1. Promotes lipolysis of lipid droplets following glucose deprivation by mediating acetylation of isoform 1 of CHKA, thereby promoting monomerization of CHKA and its conversion into a tyrosine-protein kinase. Acts as a regulator of fatty-acid-induced triacylglycerol synthesis by catalyzing acetylation of LPIN1, thereby promoting the synthesis of diacylglycerol. In addition to protein acetyltransferase, can use different acyl-CoA substrates, such as (2E)-butenoyl-CoA (crotonyl-CoA), S-lactoyl-CoA (lactyl-CoA) and 2-hydroxyisobutanoyl-CoA (2-hydroxyisobutyryl-CoA), and is able to mediate protein crotonylation, lactylation and 2-hydroxyisobutyrylation, respectively. Acts as a key regulator of chromosome segregation and kinetochore-microtubule attachment during mitosis by mediating acetylation or crotonylation of target proteins. Catalyzes acetylation of AURKB at kinetochores, increasing AURKB activity and promoting accurate chromosome segregation in mitosis. Acetylates RAN during mitosis, promoting microtubule assembly at mitotic chromosomes. Acetylates NDC80/HEC1 during mitosis, promoting robust kinetochore-microtubule attachment. Catalyzes crotonylation of MAPRE1/EB1, thereby ensuring accurate spindle positioning in mitosis. Catalyzes lactylation of NBN/NBS1 in response to DNA damage, thereby promoting DNA double-strand breaks (DSBs) via homologous recombination (HR). In Pongo abelii (Sumatran orangutan), this protein is Histone acetyltransferase KAT5.